A 128-amino-acid chain; its full sequence is Small ribosomal subunit protein uS11 (128 aa).

This sequence belongs to the universal ribosomal protein uS11 family. As to quaternary structure, part of the 30S ribosomal subunit. Interacts with proteins S7 and S18. Binds to IF-3.

In terms of biological role, located on the platform of the 30S subunit, it bridges several disparate RNA helices of the 16S rRNA. Forms part of the Shine-Dalgarno cleft in the 70S ribosome. This Aster yellows witches'-broom phytoplasma (strain AYWB) protein is Small ribosomal subunit protein uS11.